The following is a 386-amino-acid chain: Methionine aminopeptidase 1 (386 aa).

Ala2 carries the post-translational modification N-acetylalanine. The segment at 6 to 59 (TRVCETDGCSSEAKLQCPTCIKLGIQGSYFCSQECFKGSWATHKLLHKKAKDEK) adopts a C6H2-type zinc-finger fold. Zn(2+)-binding residues include Cys9, Cys14, Cys22, Cys25, Cys36, Cys40, His48, His52, and Lys53. A protein is bound at residue His203. Residues Asp220, Asp231, and His294 each coordinate Zn(2+). His301 provides a ligand contact to a protein. Positions 327 and 358 each coordinate Zn(2+).

This sequence belongs to the peptidase M24A family. Methionine aminopeptidase type 1 subfamily. As to quaternary structure, associates with the 60S ribosomal subunit of the 80S translational complex. It depends on Zn(2+) as a cofactor. The cofactor is Co(2+). Mn(2+) is required as a cofactor. Requires Fe(2+) as cofactor.

It is found in the cytoplasm. It carries out the reaction Release of N-terminal amino acids, preferentially methionine, from peptides and arylamides.. In terms of biological role, cotranslationally removes the N-terminal methionine from nascent proteins. The N-terminal methionine is often cleaved when the second residue in the primary sequence is small and uncharged (Met-Ala-, Cys, Gly, Pro, Ser, Thr, or Val). This Mus musculus (Mouse) protein is Methionine aminopeptidase 1 (Metap1).